Here is a 116-residue protein sequence, read N- to C-terminus: Small ribosomal subunit protein uS13 (116 aa).

Residues 92–116 (RRGLPVRGQNTKNNARTRKGAKRSR) are disordered. Basic residues predominate over residues 106-116 (ARTRKGAKRSR).

Belongs to the universal ribosomal protein uS13 family. As to quaternary structure, part of the 30S ribosomal subunit. Forms a loose heterodimer with protein S19. Forms two bridges to the 50S subunit in the 70S ribosome.

In terms of biological role, located at the top of the head of the 30S subunit, it contacts several helices of the 16S rRNA. In the 70S ribosome it contacts the 23S rRNA (bridge B1a) and protein L5 of the 50S subunit (bridge B1b), connecting the 2 subunits; these bridges are implicated in subunit movement. Contacts the tRNAs in the A and P-sites. The protein is Small ribosomal subunit protein uS13 of Lactobacillus delbrueckii subsp. bulgaricus (strain ATCC 11842 / DSM 20081 / BCRC 10696 / JCM 1002 / NBRC 13953 / NCIMB 11778 / NCTC 12712 / WDCM 00102 / Lb 14).